Consider the following 88-residue polypeptide: Protein transport protein SBH2 (88 aa).

Residues 1–42 (MAASVPPGGQRILQKRRQAQSIKEKQAKQTPTSTRQAGYGGS) are disordered. Residues 1-61 (MAASVPPGGQ…DEANGFRVDS (61 aa)) lie on the Cytoplasmic side of the membrane. Residues 28–42 (KQTPTSTRQAGYGGS) show a composition bias toward polar residues. The chain crosses the membrane as a helical span at residues 62 to 82 (LVVLFLSVGFIFSVIALHLLT).

The protein belongs to the SEC61-beta family. Component of the heterotrimeric Ssh1 complex, which is composed of SSH1, SBH2 and SSS1.

The protein resides in the endoplasmic reticulum membrane. Part of the Ssh1 complex, which probably is the major component of a channel-forming translocon complex that may function exclusively in the cotranslational pathway of protein endoplasmic reticulum (ER) import. The polypeptide is Protein transport protein SBH2 (SBH2) (Saccharomyces cerevisiae (strain ATCC 204508 / S288c) (Baker's yeast)).